A 400-amino-acid chain; its full sequence is Phosphoglycerate kinase (400 aa).

Substrate-binding positions include 21-23 (DFN), Arg36, 59-62 (HCSR), Arg118, and Arg151. ATP contacts are provided by residues Lys201, Glu323, and 353–356 (GGDT).

Belongs to the phosphoglycerate kinase family. As to quaternary structure, monomer.

It localises to the cytoplasm. The enzyme catalyses (2R)-3-phosphoglycerate + ATP = (2R)-3-phospho-glyceroyl phosphate + ADP. It participates in carbohydrate degradation; glycolysis; pyruvate from D-glyceraldehyde 3-phosphate: step 2/5. This is Phosphoglycerate kinase from Bartonella bacilliformis (strain ATCC 35685 / KC583 / Herrer 020/F12,63).